The following is a 737-amino-acid chain: Genome polyprotein (737 aa).

Serine 2 carries the post-translational modification N-acetylserine; by host. The tract at residues 2–23 (STNPKPQRKTKRNTNRRPQDVK) is interaction with STAT1. The interval 2 to 58 (STNPKPQRKTKRNTNRRPQDVKFPGGGQIVGGVYLLPRRGPRLGVRATRKTSERSQP) is interaction with EIF2AK2/PKR. The interval 2 to 59 (STNPKPQRKTKRNTNRRPQDVKFPGGGQIVGGVYLLPRRGPRLGVRATRKTSERSQPR) is interaction with DDX3X. Positions 2–75 (STNPKPQRKT…PKDRRSTGKS (74 aa)) are disordered. Topologically, residues 2–168 (STNPKPQRKT…EDGVNYATGN (167 aa)) are cytoplasmic. Short sequence motifs (nuclear localization signal) lie at residues 5-13 (PKPQRKTKR) and 38-43 (PRRGPR). Residues 7–16 (PQRKTKRNTN) show a composition bias toward basic residues. The span at 32–47 (GGVYLLPRRGPRLGVR) shows a compositional bias: low complexity. Serine 53 is subject to Phosphoserine; by host. 2 consecutive short sequence motifs (nuclear localization signal) follow at residues 58–64 (PRGRRQP) and 66–71 (PKDRRS). Residues serine 99 and serine 116 each carry the phosphoserine; by host modification. The tract at residues 112 to 152 (PRHRSRNVGKVIDTLTCGFADLMGYIPVVGAPLGGVARALA) is important for endoplasmic reticulum and mitochondrial localization. An interaction with APOA2 region spans residues 122–173 (VIDTLTCGFADLMGYIPVVGAPLGGVARALAHGVRVLEDGVNYATGNLPGCS). Residues 164-167 (YATG) form an important for lipid droplets localization region. A helical transmembrane segment spans residues 169–189 (LPGCSFSIFLLALLSCITVPV). A propeptide spans 178–191 (LLALLSCITVPVSA) (ER anchor for the core protein, removed in mature form by host signal peptidase). Residues 190 to 358 (SAVQVKNTSN…SGAHWGVMFG (169 aa)) are Lumenal-facing. 3 N-linked (GlcNAc...) asparagine; by host glycosylation sites follow: asparagine 196, asparagine 209, and asparagine 234. Residues 265–296 (VVVSATLCSALYVGDLCGGVMLAAQMFIVSPQ) form an important for fusion region. The N-linked (GlcNAc...) asparagine; by host glycan is linked to asparagine 305. Residues 359-379 (LAYFSMQGAWAKVVVILLLAA) traverse the membrane as a helical segment. Over 380 to 729 (GVDANTRTVA…WEWVVLLFLL (350 aa)) the chain is Lumenal. Residues 385 to 411 (TRTVAGSAAATTRGFTSMFSSGSKQNL) form an HVR1 region. Residues asparagine 417, asparagine 423, asparagine 430, and asparagine 448 are each glycosylated (N-linked (GlcNAc...) (high mannose) asparagine; by host). 4 disulfide bridges follow: cysteine 429–cysteine 554, cysteine 452–cysteine 459, cysteine 488–cysteine 496, and cysteine 505–cysteine 510. An HVR2 region spans residues 474–481 (YEDNVTNP). Residues 482–495 (EDMRPYCWHYPPKP) are CD81-binding 1. The N-linked (GlcNAc...) asparagine; by host glycan is linked to asparagine 542. The CD81-binding 2 stretch occupies residues 546–553 (PPRGSWFG). Residue asparagine 558 is glycosylated (N-linked (GlcNAc...) (high mannose) asparagine; by host). 4 disulfide bridges follow: cysteine 566–cysteine 571, cysteine 585–cysteine 589, cysteine 601–cysteine 624, and cysteine 611–cysteine 648. N-linked (GlcNAc...) (high mannose) asparagine; by host glycans are attached at residues asparagine 627 and asparagine 649. Cysteine 656 and cysteine 681 are joined by a disulfide. The segment at 664-675 (SQLSPLLHSTTE) is PKR/eIF2-alpha phosphorylation homology domain (PePHD). Residues 730–737 (LADARVCA) form a helical membrane-spanning segment.

This sequence belongs to the hepacivirus polyprotein family. Homooligomer. Interacts with E1 (via C-terminus). Interacts with the non-structural protein 5A. Interacts (via N-terminus) with host STAT1 (via SH2 domain); this interaction results in decreased STAT1 phosphorylation and ubiquitin-mediated proteasome-dependent STAT1 degradation, leading to decreased IFN-stimulated gene transcription. Interacts with host STAT3; this interaction constitutively activates STAT3. Interacts with host LTBR receptor. Interacts with host TNFRSF1A receptor and possibly induces apoptosis. Interacts with host HNRPK. Interacts with host YWHAE. Interacts with host UBE3A/E6AP. Interacts with host DDX3X. Interacts with host APOA2. Interacts with host RXRA protein. Interacts with host SP110 isoform 3/Sp110b; this interaction sequesters the transcriptional corepressor SP110 away from the nucleus. Interacts with host CREB3 nuclear transcription protein; this interaction triggers cell transformation. Interacts with host ACY3. Interacts with host C1QR1. Interacts with host RBM24; this interaction, which enhances the interaction of the mature core protein with 5'-UTR, may inhibit viral translation and favor replication. Interacts with host EIF2AK2/PKR; this interaction induces the autophosphorylation of EIF2AK2. Part of the viral assembly initiation complex composed of NS2, E1, E2, NS3, NS4A, NS5A and the mature core protein. In terms of assembly, forms a heterodimer with envelope glycoprotein E2. Interacts with mature core protein. Interacts with protease NS2. The heterodimer E1/E2 interacts with host CLDN1; this interaction plays a role in viral entry into host cell. Interacts with host SPSB2 (via C-terminus). Part of the viral assembly initiation complex composed of NS2, E1, E2, NS3, NS4A, NS5A and the mature core protein. As to quaternary structure, forms a heterodimer with envelope glycoprotein E1. Interacts with host CD81 and SCARB1 receptors; these interactions play a role in viral entry into host cell. Interacts with host EIF2AK2/PKR; this interaction inhibits EIF2AK2 and probably allows the virus to evade the innate immune response. Interacts with host CD209/DC-SIGN and CLEC4M/DC-SIGNR. Interact with host SPCS1; this interaction is essential for viral particle assembly. Interacts with protease NS2. The heterodimer E1/E2 interacts with host CLDN1; this interaction plays a role in viral entry into host cell. Part of the viral assembly initiation complex composed of NS2, E1, E2, NS3, NS4A, NS5A and the mature core protein. In terms of processing, specific enzymatic cleavages in vivo yield mature proteins. The structural proteins, core, E1, E2 and p7 are produced by proteolytic processing by host signal peptidases. The core protein precursor is synthesized as a 23 kDa, which is retained in the ER membrane through the hydrophobic signal peptide. Cleavage by the signal peptidase releases the 21 kDa mature core protein. The cleavage of the core protein precursor occurs between aminoacids 176 and 188 but the exact cleavage site is not known. Some degraded forms of the core protein appear as well during the course of infection. The other proteins (p7, NS2, NS3, NS4A, NS4B, NS5A and NS5B) are cleaved by the viral proteases. Autoprocessing between NS2 and NS3 is mediated by the NS2 cysteine protease catalytic domain and regulated by the NS3 N-terminal domain. Phosphorylated by host PKC and PKA. Post-translationally, ubiquitinated; mediated by UBE3A and leading to core protein subsequent proteasomal degradation. In terms of processing, highly N-glycosylated.

It is found in the host endoplasmic reticulum membrane. It localises to the host mitochondrion membrane. The protein localises to the virion. The protein resides in the host cytoplasm. Its subcellular location is the host nucleus. It is found in the host lipid droplet. It localises to the virion membrane. In terms of biological role, packages viral RNA to form a viral nucleocapsid, and promotes virion budding. Participates in the viral particle production as a result of its interaction with the non-structural protein 5A. Binds RNA and may function as a RNA chaperone to induce the RNA structural rearrangements taking place during virus replication. Modulates viral translation initiation by interacting with viral IRES and 40S ribosomal subunit. Affects various cell signaling pathways, host immunity and lipid metabolism. Prevents the establishment of cellular antiviral state by blocking the interferon-alpha/beta (IFN-alpha/beta) and IFN-gamma signaling pathways and by blocking the formation of phosphorylated STAT1 and promoting ubiquitin-mediated proteasome-dependent degradation of STAT1. Activates STAT3 leading to cellular transformation. Regulates the activity of cellular genes, including c-myc and c-fos. May repress the promoter of p53, and sequester CREB3 and SP110 isoform 3/Sp110b in the cytoplasm. Represses cell cycle negative regulating factor CDKN1A, thereby interrupting an important check point of normal cell cycle regulation. Targets transcription factors involved in the regulation of inflammatory responses and in the immune response: suppresses TNF-induced NF-kappa-B activation, and activates AP-1. Binds to dendritic cells (DCs) via C1QR1, resulting in down-regulation of T-lymphocytes proliferation. Alters lipid metabolism by interacting with hepatocellular proteins involved in lipid accumulation and storage. Induces up-regulation of FAS promoter activity, and thereby contributes to the increased triglyceride accumulation in hepatocytes (steatosis). Its function is as follows. Forms a heterodimer with envelope glycoprotein E2, which mediates virus attachment to the host cell, virion internalization through clathrin-dependent endocytosis and fusion with host membrane. Fusion with the host cell is most likely mediated by both E1 and E2, through conformational rearrangements of the heterodimer required for fusion rather than a classical class II fusion mechanism. E1/E2 heterodimer binds host apolipoproteins such as APOB and ApoE thereby forming a lipo-viro-particle (LVP). APOE associated to the LVP allows the initial virus attachment to cell surface receptors such as the heparan sulfate proteoglycans (HSPGs), syndecan-1 (SDC1), syndecan-1 (SDC2), the low-density lipoprotein receptor (LDLR) and scavenger receptor class B type I (SCARB1). The cholesterol transfer activity of SCARB1 allows E2 exposure and binding of E2 to SCARB1 and the tetraspanin CD81. E1/E2 heterodimer binding on CD81 activates the epithelial growth factor receptor (EGFR) signaling pathway. Diffusion of the complex E1-E2-EGFR-SCARB1-CD81 to the cell lateral membrane allows further interaction with Claudin 1 (CLDN1) and occludin (OCLN) to finally trigger HCV entry. Functionally, forms a heterodimer with envelope glycoprotein E1, which mediates virus attachment to the host cell, virion internalization through clathrin-dependent endocytosis and fusion with host membrane. Fusion with the host cell is most likely mediated by both E1 and E2, through conformational rearrangements of the heterodimer required for fusion rather than a classical class II fusion mechanism. The interaction between envelope glycoprotein E2 and host apolipoprotein E/APOE allows the proper assembly, maturation and infectivity of the viral particles. This interaction is probably promoted via the up-regulation of cellular autophagy by the virus. E1/E2 heterodimer binds host apolipoproteins such as APOB and APOE thereby forming a lipo-viro-particle (LVP). APOE associated to the LVP allows the initial virus attachment to cell surface receptors such as the heparan sulfate proteoglycans (HSPGs), syndecan-1 (SDC1), syndecan-1 (SDC2), the low-density lipoprotein receptor (LDLR) and scavenger receptor class B type I (SCARB1). The cholesterol transfer activity of SCARB1 allows E2 exposure and binding of E2 to SCARB1 and the tetraspanin CD81. E1/E2 heterodimer binding on CD81 activates the epithelial growth factor receptor (EGFR) signaling pathway. Diffusion of the complex E1-E2-EGFR-SCARB1-CD81 to the cell lateral membrane allows further interaction with Claudin 1 (CLDN1) and occludin (OCLN) to finally trigger HCV entry. Inhibits host EIF2AK2/PKR activation, preventing the establishment of an antiviral state. Viral ligand for CD209/DC-SIGN and CLEC4M/DC-SIGNR, which are respectively found on dendritic cells (DCs), and on liver sinusoidal endothelial cells and macrophage-like cells of lymph node sinuses. These interactions allow the capture of circulating HCV particles by these cells and subsequent facilitated transmission to permissive cells such as hepatocytes and lymphocyte subpopulations. This is Genome polyprotein from Homo sapiens (Human).